Here is a 144-residue protein sequence, read N- to C-terminus: Large ribosomal subunit protein uL13 (144 aa).

The protein belongs to the universal ribosomal protein uL13 family. Part of the 50S ribosomal subunit.

This protein is one of the early assembly proteins of the 50S ribosomal subunit, although it is not seen to bind rRNA by itself. It is important during the early stages of 50S assembly. The polypeptide is Large ribosomal subunit protein uL13 (Natronomonas pharaonis (strain ATCC 35678 / DSM 2160 / CIP 103997 / JCM 8858 / NBRC 14720 / NCIMB 2260 / Gabara) (Halobacterium pharaonis)).